The sequence spans 173 residues: MTIILGIDPGSRITGYGVIRQQAGKVEYLGSGCIRTSGEQLSDKLKQIYDGISEIILQFKPDLFAIEQVFMAKNPDSALKLGQARGSAIVAAVNAGLPVAEYAARQVKQSVVGTGAADKEQVQHMVKQLLKLPACPQADAADALAVALCHSHTQQTLIRMAGKVHGTARGRLR.

Catalysis depends on residues D8, E67, and D139. Mg(2+)-binding residues include D8, E67, and D139.

Belongs to the RuvC family. As to quaternary structure, homodimer which binds Holliday junction (HJ) DNA. The HJ becomes 2-fold symmetrical on binding to RuvC with unstacked arms; it has a different conformation from HJ DNA in complex with RuvA. In the full resolvosome a probable DNA-RuvA(4)-RuvB(12)-RuvC(2) complex forms which resolves the HJ. Requires Mg(2+) as cofactor.

The protein resides in the cytoplasm. It carries out the reaction Endonucleolytic cleavage at a junction such as a reciprocal single-stranded crossover between two homologous DNA duplexes (Holliday junction).. Its function is as follows. The RuvA-RuvB-RuvC complex processes Holliday junction (HJ) DNA during genetic recombination and DNA repair. Endonuclease that resolves HJ intermediates. Cleaves cruciform DNA by making single-stranded nicks across the HJ at symmetrical positions within the homologous arms, yielding a 5'-phosphate and a 3'-hydroxyl group; requires a central core of homology in the junction. The consensus cleavage sequence is 5'-(A/T)TT(C/G)-3'. Cleavage occurs on the 3'-side of the TT dinucleotide at the point of strand exchange. HJ branch migration catalyzed by RuvA-RuvB allows RuvC to scan DNA until it finds its consensus sequence, where it cleaves and resolves the cruciform DNA. This chain is Crossover junction endodeoxyribonuclease RuvC, found in Tolumonas auensis (strain DSM 9187 / NBRC 110442 / TA 4).